A 97-amino-acid chain; its full sequence is Protein RALF-like 2 (97 aa).

A signal peptide spans 1–25; it reads MEARHMLVTILLLSFVFMNIMKVEA. Disulfide bonds link Cys-42–Cys-49 and Cys-61–Cys-67.

It belongs to the plant rapid alkalinization factor (RALF) family.

The protein resides in the secreted. Functionally, cell signaling peptide that may regulate plant stress, growth, and development. Mediates a rapid alkalinization of extracellular space by mediating a transient increase in the cytoplasmic Ca(2+) concentration leading to a calcium-dependent signaling events through a cell surface receptor and a concomitant activation of some intracellular mitogen-activated protein kinases. The polypeptide is Protein RALF-like 2 (RALFL2) (Arabidopsis thaliana (Mouse-ear cress)).